Here is a 448-residue protein sequence, read N- to C-terminus: Asparagine--tRNA ligase (448 aa).

It belongs to the class-II aminoacyl-tRNA synthetase family. In terms of assembly, homodimer.

It localises to the cytoplasm. The catalysed reaction is tRNA(Asn) + L-asparagine + ATP = L-asparaginyl-tRNA(Asn) + AMP + diphosphate + H(+). The chain is Asparagine--tRNA ligase from Streptococcus thermophilus (strain ATCC BAA-250 / LMG 18311).